The primary structure comprises 197 residues: UPF0251 protein CT1277 (197 aa).

Positions 138-197 are disordered; that stretch reads GGGFGGGRRGGGKCRGFRSGLDRGPGHGEGRCQGEGHGNGNGNGNGQGRMRRNQQEGGEV. Residues 157 to 171 show a composition bias toward basic and acidic residues; sequence GLDRGPGHGEGRCQG. Residues 172–184 are compositionally biased toward gly residues; it reads EGHGNGNGNGNGQ.

The protein belongs to the UPF0251 family.

The protein is UPF0251 protein CT1277 of Chlorobaculum tepidum (strain ATCC 49652 / DSM 12025 / NBRC 103806 / TLS) (Chlorobium tepidum).